A 335-amino-acid chain; its full sequence is Probable peroxidase 26 (335 aa).

The N-terminal stretch at 1–18 is a signal peptide; sequence MVMIHIFLTVMVVGGVSL. Disulfide bonds link Cys46–Cys122, Cys79–Cys84, Cys128–Cys331, and Cys205–Cys237. The active site involves Arg73. Asp78, Val81, Gly83, Asp85, and Ser87 together coordinate Ca(2+). Pro168 provides a ligand contact to substrate. Residue His198 participates in heme b binding. Ser199 provides a ligand contact to Ca(2+). N-linked (GlcNAc...) asparagine glycosylation occurs at Asn216. Ca(2+) is bound by residues Asp255 and Ser258. N-linked (GlcNAc...) asparagine glycosylation is found at Asn259 and Asn273.

The protein belongs to the peroxidase family. Classical plant (class III) peroxidase subfamily. Requires heme b as cofactor. It depends on Ca(2+) as a cofactor.

The protein localises to the secreted. The enzyme catalyses 2 a phenolic donor + H2O2 = 2 a phenolic radical donor + 2 H2O. In terms of biological role, removal of H(2)O(2), oxidation of toxic reductants, biosynthesis and degradation of lignin, suberization, auxin catabolism, response to environmental stresses such as wounding, pathogen attack and oxidative stress. The enzyme activity has to be proved. The sequence is that of Probable peroxidase 26 (PER26) from Arabidopsis thaliana (Mouse-ear cress).